Consider the following 1470-residue polypeptide: Collagen alpha-1(XVII) chain (1470 aa).

3 disordered regions span residues 1-155 (MDVT…PSTR), 167-193 (KGSR…GTVE), and 422-452 (SAEN…GGAS). Residues 1–476 (MDVTKKSKRD…CGSCCSWWKW (476 aa)) lie on the Cytoplasmic side of the membrane. The interval 1 to 573 (MDVTKKSKRD…MTEQENGNLR (573 aa)) is nonhelical region (NC16). Basic and acidic residues predominate over residues 9–19 (RDGTEVTERIV). Positions 60 to 74 (GSSGYINSSGSIRGN) are enriched in low complexity. 3 stretches are compositionally biased toward polar residues: residues 75–96 (ASTS…SPGS), 111–120 (EGSSSGNSSP), and 170–184 (RSAS…SNTL). Positions 146–231 (RLQSASPSTR…WSSTLPAGSS (86 aa)) are necessary for interaction with DST and for the recruitment of DST to hemidesmosome. Gly residues predominate over residues 430-452 (RGGGGGRGKGGGAGGGGGGGGAS). Residues 477–497 (LLGLLLTWLLLLGLLFGLIAL) traverse the membrane as a helical; Signal-anchor for type II membrane protein segment. The Extracellular segment spans residues 498–1470 (AEEVRKLKAR…RRKRSIAIKP (973 aa)). Position 551 is a phosphoserine; by CK2 (S551). Disordered stretches follow at residues 568–873 (ENGN…FLSS), 885–999 (GVDL…SSSG), 1159–1181 (DYRN…NAWS), 1194–1220 (TAGL…GVSA), and 1249–1298 (FIVG…TNGG). Positions 574 to 1456 (GSPGPKGDMG…KGEKGDKGDQ (883 aa)) are triple-helical region. Residues 597–609 (PGIPGPLGHPGPE) show a composition bias toward pro residues. 2 stretches are compositionally biased toward low complexity: residues 742–755 (EPGA…AGAD) and 781–803 (DPGK…PGRP). Pro residues predominate over residues 827-848 (PGPPGPPGAMGPPGPPGTPGPA). Over residues 850–873 (PAGLPGQQGPRGEPGLAGDSFLSS) the composition is skewed to low complexity. Pro residues-rich tracts occupy residues 891–914 (PPGP…PRGP), 940–949 (PPGPPGPPGP), 982–992 (PPGPPGPPGPP), 1166–1175 (PPGPPGPPGM), 1201–1215 (PGPP…PRGP), and 1253–1262 (PPGPPGPQGP). N-linked (GlcNAc...) asparagine glycosylation occurs at N1273. A compositionally biased stretch (low complexity) spans 1275 to 1290 (SSNSSARRGTSYSSST). N1395 is a glycosylation site (N-linked (GlcNAc...) asparagine). The tract at residues 1406 to 1470 (TYGTIPGPPG…RRKRSIAIKP (65 aa)) is disordered. Positions 1434-1443 (PRGPPGPPGP) are enriched in pro residues. Positions 1446–1455 (NKGEKGDKGD) are enriched in basic and acidic residues. Residues 1457–1470 (VYTGRRKRSIAIKP) form a nonhelical region (NC1) region. The span at 1460–1470 (GRRKRSIAIKP) shows a compositional bias: basic residues.

As to quaternary structure, homotrimers of alpha 1(XVII)chains. Interacts (via cytoplasmic region) with ITGB4 (via cytoplasmic region). Interacts (via cytoplasmic region) with DST (via N-terminus). Interacts (via N-terminus) with PLEC. Interacts (via cytoplasmic region) with DSP. The intracellular/endo domain is disulfide-linked. Post-translationally, prolines at the third position of the tripeptide repeating unit (G-X-Y) are hydroxylated in some or all of the chains. In terms of processing, the ectodomain is shedded from the surface of keratinocytes resulting in a 120-kDa soluble form, also named as 120 kDa linear IgA disease antigen homolog. The shedding is mediated by membrane-bound metalloproteases. This cleavage is inhibited by phosphorylation at Ser-551.

Its subcellular location is the cell junction. The protein localises to the hemidesmosome. It is found in the membrane. The protein resides in the secreted. It localises to the extracellular space. Its subcellular location is the extracellular matrix. The protein localises to the basement membrane. In terms of biological role, may play a role in the integrity of hemidesmosome and the attachment of basal keratinocytes to the underlying basement membrane. The 120 kDa linear IgA disease antigen homolog is an anchoring filament component involved in dermal-epidermal cohesion. This chain is Collagen alpha-1(XVII) chain (Col17a1), found in Mus musculus (Mouse).